The chain runs to 540 residues: Chaperonin GroEL (540 aa).

Residues 29 to 32 (TLGP), 86 to 90 (DGTTT), Gly413, 476 to 478 (NAA), and Asp492 each bind ATP.

Belongs to the chaperonin (HSP60) family. In terms of assembly, forms a cylinder of 14 subunits composed of two heptameric rings stacked back-to-back. Interacts with the co-chaperonin GroES.

It localises to the cytoplasm. The catalysed reaction is ATP + H2O + a folded polypeptide = ADP + phosphate + an unfolded polypeptide.. Its function is as follows. Together with its co-chaperonin GroES, plays an essential role in assisting protein folding. The GroEL-GroES system forms a nano-cage that allows encapsulation of the non-native substrate proteins and provides a physical environment optimized to promote and accelerate protein folding. The polypeptide is Chaperonin GroEL (Streptococcus pneumoniae (strain Hungary19A-6)).